Consider the following 700-residue polypeptide: Elongation factor G (700 aa).

The tr-type G domain maps to S8–T290. Residues A17 to T24, D88 to H92, and N142 to D145 each bind GTP.

It belongs to the TRAFAC class translation factor GTPase superfamily. Classic translation factor GTPase family. EF-G/EF-2 subfamily.

The protein localises to the cytoplasm. Functionally, catalyzes the GTP-dependent ribosomal translocation step during translation elongation. During this step, the ribosome changes from the pre-translocational (PRE) to the post-translocational (POST) state as the newly formed A-site-bound peptidyl-tRNA and P-site-bound deacylated tRNA move to the P and E sites, respectively. Catalyzes the coordinated movement of the two tRNA molecules, the mRNA and conformational changes in the ribosome. The chain is Elongation factor G from Histophilus somni (strain 129Pt) (Haemophilus somnus).